Consider the following 517-residue polypeptide: Beta-galactoside alpha-2,6-sialyltransferase 2 (517 aa).

At 1 to 10 (MKPNLKQWKQ) the chain is on the cytoplasmic side. Residues 11–31 (FMLFGICAWGLLFLVIFVYFT) form a helical; Signal-anchor for type II membrane protein membrane-spanning segment. Topologically, residues 32 to 517 (DSNSVEPVPS…IHCPIKDHIT (486 aa)) are lumenal. N-linked (GlcNAc...) asparagine glycosylation is found at Asn201, Asn298, and Asn328. 3 disulfides stabilise this stretch: Cys244–Cys510, Cys287–Cys439, and Cys457–Cys468.

It belongs to the glycosyltransferase 29 family.

It localises to the golgi apparatus. The protein localises to the golgi stack membrane. It carries out the reaction a beta-D-galactoside + CMP-N-acetyl-beta-neuraminate = an N-acetyl-alpha-neuraminyl-(2-&gt;6)-beta-D-galactosyl derivative + CMP + H(+). Transfers sialic acid from the donor of substrate CMP-sialic acid to galactose containing acceptor substrates. The protein is Beta-galactoside alpha-2,6-sialyltransferase 2 (st6gal2) of Xenopus tropicalis (Western clawed frog).